A 460-amino-acid polypeptide reads, in one-letter code: Muscarinic acetylcholine receptor M1 (460 aa).

Residues methionine 1–proline 22 are Extracellular-facing. Asparagine 2 and asparagine 12 each carry an N-linked (GlcNAc...) asparagine glycan. Residues tryptophan 23–isoleucine 48 form a helical membrane-spanning segment. Topologically, residues serine 49 to tyrosine 62 are cytoplasmic. Residues phenylalanine 63–threonine 84 form a helical membrane-spanning segment. Residues tyrosine 85–threonine 95 lie on the Extracellular side of the membrane. A helical transmembrane segment spans residues leucine 96–phenylalanine 121. A disulfide bond links cysteine 98 and cysteine 178. Topologically, residues aspartate 122–alanine 142 are cytoplasmic. A helical transmembrane segment spans residues alanine 143–tryptophan 164. The Extracellular segment spans residues glutamine 165–glutamine 185. Residues proline 186 to tryptophan 209 traverse the membrane as a helical segment. The Cytoplasmic segment spans residues arginine 210–threonine 366. 3 disordered regions span residues leucine 225 to proline 256, tryptophan 274 to proline 296, and glutamate 310 to lysine 351. Threonine 230 is subject to Phosphothreonine. A compositionally biased stretch (low complexity) spans serine 238 to glycine 247. The segment covering arginine 328 to proline 343 has biased composition (basic residues). The chain crosses the membrane as a helical span at residues leucine 367 to phenylalanine 390. The Extracellular portion of the chain corresponds to cysteine 391 to glutamate 397. A helical membrane pass occupies residues threonine 398 to leucine 420. The Cytoplasmic portion of the chain corresponds to cysteine 421 to cysteine 460. Position 428 is a phosphothreonine (threonine 428). Phosphoserine is present on serine 451. A Phosphothreonine modification is found at threonine 455. The residue at position 457 (serine 457) is a Phosphoserine.

It belongs to the G-protein coupled receptor 1 family. Muscarinic acetylcholine receptor subfamily. CHRM1 sub-subfamily. As to quaternary structure, interacts with GPRASP2. Interacts with TMEM147.

Its subcellular location is the cell membrane. The protein resides in the postsynaptic cell membrane. The muscarinic acetylcholine receptor mediates various cellular responses, including inhibition of adenylate cyclase, breakdown of phosphoinositides and modulation of potassium channels through the action of G proteins. Primary transducing effect is Pi turnover. This Sus scrofa (Pig) protein is Muscarinic acetylcholine receptor M1 (CHRM1).